The chain runs to 172 residues: Transcription factor E (172 aa).

Residues 8-90 enclose the HTH TFE/IIEalpha-type domain; sequence DDPVVQKYLH…LWTFQYENVP (83 aa).

Belongs to the TFE family. In terms of assembly, monomer. Interaction with RNA polymerase subunits RpoF and RpoE is necessary for Tfe stimulatory transcription activity. Able to interact with Tbp and RNA polymerase in the absence of DNA promoter. Interacts both with the preinitiation and elongation complexes.

In terms of biological role, transcription factor that plays a role in the activation of archaeal genes transcribed by RNA polymerase. Facilitates transcription initiation by enhancing TATA-box recognition by TATA-box-binding protein (Tbp), and transcription factor B (Tfb) and RNA polymerase recruitment. Not absolutely required for transcription in vitro, but particularly important in cases where Tbp or Tfb function is not optimal. It dynamically alters the nucleic acid-binding properties of RNA polymerases by stabilizing the initiation complex and destabilizing elongation complexes. Seems to translocate with the RNA polymerase following initiation and acts by binding to the non template strand of the transcription bubble in elongation complexes. In Halobacterium salinarum (strain ATCC 700922 / JCM 11081 / NRC-1) (Halobacterium halobium), this protein is Transcription factor E.